We begin with the raw amino-acid sequence, 95 residues long: Aspartyl/glutamyl-tRNA(Asn/Gln) amidotransferase subunit C (95 aa).

The protein belongs to the GatC family. In terms of assembly, heterotrimer of A, B and C subunits.

It carries out the reaction L-glutamyl-tRNA(Gln) + L-glutamine + ATP + H2O = L-glutaminyl-tRNA(Gln) + L-glutamate + ADP + phosphate + H(+). The enzyme catalyses L-aspartyl-tRNA(Asn) + L-glutamine + ATP + H2O = L-asparaginyl-tRNA(Asn) + L-glutamate + ADP + phosphate + 2 H(+). In terms of biological role, allows the formation of correctly charged Asn-tRNA(Asn) or Gln-tRNA(Gln) through the transamidation of misacylated Asp-tRNA(Asn) or Glu-tRNA(Gln) in organisms which lack either or both of asparaginyl-tRNA or glutaminyl-tRNA synthetases. The reaction takes place in the presence of glutamine and ATP through an activated phospho-Asp-tRNA(Asn) or phospho-Glu-tRNA(Gln). This Hydrogenovibrio crunogenus (strain DSM 25203 / XCL-2) (Thiomicrospira crunogena) protein is Aspartyl/glutamyl-tRNA(Asn/Gln) amidotransferase subunit C.